Consider the following 476-residue polypeptide: Bifunctional protein HldE (476 aa).

The ribokinase stretch occupies residues 1-318 (MFQYSAEFKQ…ENAIHGRSNT (318 aa)). 195 to 198 (NMSE) contacts ATP. Aspartate 264 is an active-site residue. A cytidylyltransferase region spans residues 344 to 476 (MTNGCFDILH…VISKIQQLKD (133 aa)).

This sequence in the N-terminal section; belongs to the carbohydrate kinase PfkB family. It in the C-terminal section; belongs to the cytidylyltransferase family. In terms of assembly, homodimer.

It carries out the reaction D-glycero-beta-D-manno-heptose 7-phosphate + ATP = D-glycero-beta-D-manno-heptose 1,7-bisphosphate + ADP + H(+). It catalyses the reaction D-glycero-beta-D-manno-heptose 1-phosphate + ATP + H(+) = ADP-D-glycero-beta-D-manno-heptose + diphosphate. It functions in the pathway nucleotide-sugar biosynthesis; ADP-L-glycero-beta-D-manno-heptose biosynthesis; ADP-L-glycero-beta-D-manno-heptose from D-glycero-beta-D-manno-heptose 7-phosphate: step 1/4. It participates in nucleotide-sugar biosynthesis; ADP-L-glycero-beta-D-manno-heptose biosynthesis; ADP-L-glycero-beta-D-manno-heptose from D-glycero-beta-D-manno-heptose 7-phosphate: step 3/4. The protein operates within bacterial outer membrane biogenesis; LPS core biosynthesis. Catalyzes the phosphorylation of D-glycero-D-manno-heptose 7-phosphate at the C-1 position to selectively form D-glycero-beta-D-manno-heptose-1,7-bisphosphate. In terms of biological role, catalyzes the ADP transfer from ATP to D-glycero-beta-D-manno-heptose 1-phosphate, yielding ADP-D-glycero-beta-D-manno-heptose. The sequence is that of Bifunctional protein HldE from Pasteurella multocida (strain Pm70).